We begin with the raw amino-acid sequence, 147 residues long: 3-hydroxyacyl-[acyl-carrier-protein] dehydratase FabZ (147 aa).

Histidine 49 is an active-site residue.

This sequence belongs to the thioester dehydratase family. FabZ subfamily.

It localises to the cytoplasm. The enzyme catalyses a (3R)-hydroxyacyl-[ACP] = a (2E)-enoyl-[ACP] + H2O. Functionally, involved in unsaturated fatty acids biosynthesis. Catalyzes the dehydration of short chain beta-hydroxyacyl-ACPs and long chain saturated and unsaturated beta-hydroxyacyl-ACPs. The sequence is that of 3-hydroxyacyl-[acyl-carrier-protein] dehydratase FabZ from Alkaliphilus metalliredigens (strain QYMF).